The chain runs to 322 residues: Trans-acting factor B (322 aa).

The disordered stretch occupies residues 35–188; that stretch reads DDAEAVFPTS…ASTQEAETAE (154 aa). Composition is skewed to polar residues over residues 72–97 and 110–166; these read QEST…SIGR and QESP…TSRA. A compositionally biased stretch (basic and acidic residues) spans 167 to 178; it reads AETRERSPEHTE.

Its function is as follows. Plasmid partition require REP1, REP2, and a cis-acting DNA sequence (known as STB). REP1 may act by intercalating in the yeast nuclear matrix and binding STB either directly or via REP2. The polypeptide is Trans-acting factor B (B) (Zygosaccharomyces bisporus).